The sequence spans 422 residues: 3-phosphoshikimate 1-carboxyvinyltransferase (422 aa).

3-phosphoshikimate-binding residues include K20, S21, and R25. Position 20 (K20) interacts with phosphoenolpyruvate. Phosphoenolpyruvate is bound by residues G90 and R118. 3-phosphoshikimate-binding residues include S163, S164, Q165, S191, D306, and K333. Residue Q165 coordinates phosphoenolpyruvate. D306 acts as the Proton acceptor in catalysis. The phosphoenolpyruvate site is built by R337 and R378.

It belongs to the EPSP synthase family. As to quaternary structure, monomer.

The protein resides in the cytoplasm. It catalyses the reaction 3-phosphoshikimate + phosphoenolpyruvate = 5-O-(1-carboxyvinyl)-3-phosphoshikimate + phosphate. It functions in the pathway metabolic intermediate biosynthesis; chorismate biosynthesis. In terms of biological role, catalyzes the transfer of the enolpyruvyl moiety of phosphoenolpyruvate (PEP) to the 5-hydroxyl of shikimate-3-phosphate (S3P) to produce enolpyruvyl shikimate-3-phosphate and inorganic phosphate. The sequence is that of 3-phosphoshikimate 1-carboxyvinyltransferase from Methanocella arvoryzae (strain DSM 22066 / NBRC 105507 / MRE50).